Consider the following 646-residue polypeptide: Galactofuranosyltransferase GlfT2 (646 aa).

Residues R182, Q211, N240, and D267 each coordinate UDP-alpha-D-galactofuranose. Positions 267 and 269 each coordinate Mn(2+). D384 functions as the Proton acceptor in the catalytic mechanism. H408 contributes to the Mn(2+) binding site.

Belongs to the glycosyltransferase 2 family. As to quaternary structure, homotetramer. Requires Mn(2+) as cofactor. Mg(2+) is required as a cofactor.

It localises to the cell membrane. It carries out the reaction beta-D-galactofuranosyl-(1-&gt;5)-beta-D-galactofuranosyl-(1-&gt;4)-alpha-L-rhamnosyl-(1-&gt;3)-N-acetyl-alpha-D-glucosaminyl-diphospho-trans,octa-cis-decaprenol + 28 UDP-alpha-D-galactofuranose = [beta-D-galactofuranosyl-(1-&gt;5)-beta-D-galactofuranosyl-(1-&gt;6)]14-beta-D-galactofuranosyl-(1-&gt;5)-beta-D-galactofuranosyl-(1-&gt;4)-alpha-L-rhamnopyranosyl-(1-&gt;3)-N-acetyl-alpha-D-glucosaminyl-diphospho-trans,octa-cis-decaprenol + 28 UDP + 28 H(+). It participates in cell wall biogenesis; cell wall polysaccharide biosynthesis. Its function is as follows. Involved in the galactan polymerization of the arabinogalactan (AG) region of the mycolylarabinogalactan-peptidoglycan (mAGP) complex, an essential component of the mycobacteria cell wall. Thus, successively transfers approximately 28 galactofuranosyl (Galf) residues from UDP-galactofuranose (UDP-Galf) onto the galactofuranosyl-galactofuranosyl-rhamnosyl-GlcNAc-diphospho-decaprenol (Galf-Galf-Rha-GlcNAc-PP-C50) acceptor produced by GlfT1, with alternating 1-&gt;5 and 1-&gt;6 links, forming a galactan domain with approximately 30 galactofuranosyl residues. This is Galactofuranosyltransferase GlfT2 from Mycolicibacterium smegmatis (strain ATCC 700084 / mc(2)155) (Mycobacterium smegmatis).